We begin with the raw amino-acid sequence, 405 residues long: Enoyl-[acyl-carrier-protein] reductase [NADH] (405 aa).

NAD(+) is bound by residues 48–53, 74–75, 111–112, and 140–141; these read GASSGY, FE, DA, and LA. Tyr-226 is a substrate binding site. Catalysis depends on Tyr-236, which acts as the Proton donor. NAD(+)-binding positions include Lys-245 and 274–276; that span reads VVT.

This sequence belongs to the TER reductase family. Monomer.

The catalysed reaction is a 2,3-saturated acyl-[ACP] + NAD(+) = a (2E)-enoyl-[ACP] + NADH + H(+). It participates in lipid metabolism; fatty acid biosynthesis. In terms of biological role, involved in the final reduction of the elongation cycle of fatty acid synthesis (FAS II). Catalyzes the reduction of a carbon-carbon double bond in an enoyl moiety that is covalently linked to an acyl carrier protein (ACP). This chain is Enoyl-[acyl-carrier-protein] reductase [NADH], found in Xanthomonas oryzae pv. oryzae (strain PXO99A).